The chain runs to 309 residues: MGLCKCPKRKVTNLFCYEHRVNVCEFCLVDNHPNCVVQSYLTWLTDQDYDPNCSLCKTTLAEGDTIRLNCLHLLHWKCFDEWAANFPATTAPAGYRCPCCSQEVFPPINEVSPLIEKLREQLKQSNWARAALGLPTLPELNRPVPSPAPPQLKNAPVMHKEVPVHNNRSSTPATHLEMEDTASYSVSNNDVTFARKKNYGAESSSDTRPLLQLRDADNEENKYKRRPTMDWMRGLWRAKHGGSGVPQERASAKKIALFVIFLAVLALITIIMVMKRAGYSGEHSSDPLFDPMANPNIRVAVEDSRLPHV.

The B box-type; degenerate zinc-finger motif lies at 1–43 (MGLCKCPKRKVTNLFCYEHRVNVCEFCLVDNHPNCVVQSYLTW). Residues 53–101 (CSLCKTTLAEGDTIRLNCLHLLHWKCFDEWAANFPATTAPAGYRCPCCS) form an RING-type; atypical zinc finger. Positions 200–221 (GAESSSDTRPLLQLRDADNEEN) are disordered. The chain crosses the membrane as a helical span at residues 254-274 (KIALFVIFLAVLALITIIMVM).

Belongs to the ZFPL1 family.

The protein localises to the membrane. The protein is Zinc finger protein-like 1 homolog of Caenorhabditis elegans.